The chain runs to 292 residues: Ribosomal protein L11 methyltransferase (292 aa).

The S-adenosyl-L-methionine site is built by T144, G165, D187, and N229.

It belongs to the methyltransferase superfamily. PrmA family.

It is found in the cytoplasm. The enzyme catalyses L-lysyl-[protein] + 3 S-adenosyl-L-methionine = N(6),N(6),N(6)-trimethyl-L-lysyl-[protein] + 3 S-adenosyl-L-homocysteine + 3 H(+). In terms of biological role, methylates ribosomal protein L11. The polypeptide is Ribosomal protein L11 methyltransferase (Pseudomonas savastanoi pv. phaseolicola (strain 1448A / Race 6) (Pseudomonas syringae pv. phaseolicola (strain 1448A / Race 6))).